Reading from the N-terminus, the 195-residue chain is Imidazoleglycerol-phosphate dehydratase (195 aa).

This sequence belongs to the imidazoleglycerol-phosphate dehydratase family.

It localises to the cytoplasm. The enzyme catalyses D-erythro-1-(imidazol-4-yl)glycerol 3-phosphate = 3-(imidazol-4-yl)-2-oxopropyl phosphate + H2O. It functions in the pathway amino-acid biosynthesis; L-histidine biosynthesis; L-histidine from 5-phospho-alpha-D-ribose 1-diphosphate: step 6/9. This Dechloromonas aromatica (strain RCB) protein is Imidazoleglycerol-phosphate dehydratase.